The sequence spans 60 residues: Snake venom metalloproteinase bothrojaractivase (60 aa).

Positions 1-60 constitute a Peptidase M12B domain; that stretch reads RYIELAVVADHGMFTKYRVHELVNTVNGFFRSKQDLIKVQKDKTLTSFGEWRERDLLPRI. Residue E4 participates in Ca(2+) binding.

Belongs to the venom metalloproteinase (M12B) family. P-I subfamily. As to quaternary structure, monomer. Zn(2+) serves as cofactor. As to expression, expressed by the venom gland.

The protein localises to the secreted. With respect to regulation, completely inhibited by EDTA and EGTA. Partially inhibited by serine proteinase inhibitors PMSF and benzamidine. Not inhibited by cysteine proteinase inhibitors mercury ions and E-64. Is active without cofactors, although the presence of low concentrations of calcium and zinc ions enhanced its ability to convert prothrombin (F2) into active thrombin. Functionally, prothrombin (F2) activator that is cofactor-independent. Also has fibrinolytic and fibrinogenolytic activity. It degrades the Aalpha-chain and more slowly the Bbeta-chain of fibrin and fibrinogen, while the gamma-chain is only partially and slowly affected. A dose-dependent procoagulant activity is shown in human plasma. The sequence is that of Snake venom metalloproteinase bothrojaractivase from Bothrops jararaca (Jararaca).